We begin with the raw amino-acid sequence, 203 residues long: Holliday junction branch migration complex subunit RuvA (203 aa).

The segment at 1–64 is domain I; that stretch reads MIGRLRGIII…EDAQLLYGFN (64 aa). Residues 65 to 142 form a domain II region; the sequence is NKQERTLFKE…KGLHGDLFTP (78 aa). The segment at 143–154 is flexible linker; the sequence is AADLVLTSPASP. Residues 155 to 203 form a domain III region; sequence ATDDAEQEAVAALVALGYKPQEASRMVSKIARPDASSETLIREALRAAL.

This sequence belongs to the RuvA family. In terms of assembly, homotetramer. Forms an RuvA(8)-RuvB(12)-Holliday junction (HJ) complex. HJ DNA is sandwiched between 2 RuvA tetramers; dsDNA enters through RuvA and exits via RuvB. An RuvB hexamer assembles on each DNA strand where it exits the tetramer. Each RuvB hexamer is contacted by two RuvA subunits (via domain III) on 2 adjacent RuvB subunits; this complex drives branch migration. In the full resolvosome a probable DNA-RuvA(4)-RuvB(12)-RuvC(2) complex forms which resolves the HJ.

The protein resides in the cytoplasm. Its function is as follows. The RuvA-RuvB-RuvC complex processes Holliday junction (HJ) DNA during genetic recombination and DNA repair, while the RuvA-RuvB complex plays an important role in the rescue of blocked DNA replication forks via replication fork reversal (RFR). RuvA specifically binds to HJ cruciform DNA, conferring on it an open structure. The RuvB hexamer acts as an ATP-dependent pump, pulling dsDNA into and through the RuvAB complex. HJ branch migration allows RuvC to scan DNA until it finds its consensus sequence, where it cleaves and resolves the cruciform DNA. The protein is Holliday junction branch migration complex subunit RuvA of Shigella boydii serotype 18 (strain CDC 3083-94 / BS512).